Consider the following 475-residue polypeptide: Ribulose bisphosphate carboxylase large chain (475 aa).

Residues 1–2 constitute a propeptide that is removed on maturation; the sequence is MS. At Pro3 the chain carries N-acetylproline. Lys14 is subject to N6,N6,N6-trimethyllysine. Positions 123 and 173 each coordinate substrate. Lys175 serves as the catalytic Proton acceptor. Lys177 contributes to the substrate binding site. 3 residues coordinate Mg(2+): Lys201, Asp203, and Glu204. Lys201 carries the post-translational modification N6-carboxylysine. Catalysis depends on His294, which acts as the Proton acceptor. The substrate site is built by Arg295, His327, and Ser379.

Belongs to the RuBisCO large chain family. Type I subfamily. In terms of assembly, heterohexadecamer of 8 large chains and 8 small chains; disulfide-linked. The disulfide link is formed within the large subunit homodimers. Mg(2+) serves as cofactor. The disulfide bond which can form in the large chain dimeric partners within the hexadecamer appears to be associated with oxidative stress and protein turnover.

Its subcellular location is the plastid. The protein localises to the chloroplast. It carries out the reaction 2 (2R)-3-phosphoglycerate + 2 H(+) = D-ribulose 1,5-bisphosphate + CO2 + H2O. The catalysed reaction is D-ribulose 1,5-bisphosphate + O2 = 2-phosphoglycolate + (2R)-3-phosphoglycerate + 2 H(+). Functionally, ruBisCO catalyzes two reactions: the carboxylation of D-ribulose 1,5-bisphosphate, the primary event in carbon dioxide fixation, as well as the oxidative fragmentation of the pentose substrate in the photorespiration process. Both reactions occur simultaneously and in competition at the same active site. This chain is Ribulose bisphosphate carboxylase large chain, found in Nandina domestica (Heavenly bamboo).